Here is a 355-residue protein sequence, read N- to C-terminus: Uroporphyrinogen decarboxylase (355 aa).

Substrate is bound by residues 27–31 (RQAGR), aspartate 77, tyrosine 154, threonine 209, and histidine 328.

The protein belongs to the uroporphyrinogen decarboxylase family. Homodimer.

The protein localises to the cytoplasm. The catalysed reaction is uroporphyrinogen III + 4 H(+) = coproporphyrinogen III + 4 CO2. It functions in the pathway porphyrin-containing compound metabolism; protoporphyrin-IX biosynthesis; coproporphyrinogen-III from 5-aminolevulinate: step 4/4. In terms of biological role, catalyzes the decarboxylation of four acetate groups of uroporphyrinogen-III to yield coproporphyrinogen-III. This Vibrio campbellii (strain ATCC BAA-1116) protein is Uroporphyrinogen decarboxylase.